The chain runs to 106 residues: Urease subunit beta (106 aa).

It belongs to the urease beta subunit family. In terms of assembly, heterotrimer of UreA (gamma), UreB (beta) and UreC (alpha) subunits. Three heterotrimers associate to form the active enzyme.

It localises to the cytoplasm. It carries out the reaction urea + 2 H2O + H(+) = hydrogencarbonate + 2 NH4(+). Its pathway is nitrogen metabolism; urea degradation; CO(2) and NH(3) from urea (urease route): step 1/1. This Synechococcus sp. (strain CC9902) protein is Urease subunit beta.